The sequence spans 401 residues: L-methionine gamma-lyase (401 aa).

Pyridoxal 5'-phosphate contacts are provided by residues 59–61 (YTR) and 89–90 (GI). Substrate is bound at residue Y114. Position 210–212 (210–212 (SAT)) interacts with pyridoxal 5'-phosphate. K213 is modified (N6-(pyridoxal phosphate)lysine). R377 lines the substrate pocket.

This sequence belongs to the trans-sulfuration enzymes family. L-methionine gamma-lyase subfamily. In terms of assembly, homotetramer; dimer of active dimers. Pyridoxal 5'-phosphate is required as a cofactor.

It catalyses the reaction L-methionine + H2O = methanethiol + 2-oxobutanoate + NH4(+). It carries out the reaction L-homocysteine + H2O = 2-oxobutanoate + hydrogen sulfide + NH4(+) + H(+). Functionally, catalyzes the alpha,gamma-elimination of L-methionine to produce methanethiol, 2-oxobutanoate and ammonia; methanethiol (methyl mercaptan) is considered to be one of the main causes of the oral malodor associated with periodontitis and may also play a role in the pathogenicity of T.denticola. Also displays homocysteine desulfhydrase activity, degrading homocysteine to produce hydrogen sulfide, 2-oxobutanoate and ammonia. This chain is L-methionine gamma-lyase, found in Treponema denticola (strain ATCC 35405 / DSM 14222 / CIP 103919 / JCM 8153 / KCTC 15104).